The primary structure comprises 479 residues: Ribosomal RNA small subunit methyltransferase F (479 aa).

S-adenosyl-L-methionine-binding positions include 125–131 (AAAPGSK), glutamate 149, aspartate 176, and aspartate 194. Residue cysteine 247 is the Nucleophile of the active site.

The protein belongs to the class I-like SAM-binding methyltransferase superfamily. RsmB/NOP family.

Its subcellular location is the cytoplasm. It catalyses the reaction cytidine(1407) in 16S rRNA + S-adenosyl-L-methionine = 5-methylcytidine(1407) in 16S rRNA + S-adenosyl-L-homocysteine + H(+). Specifically methylates the cytosine at position 1407 (m5C1407) of 16S rRNA. This Shigella dysenteriae serotype 1 (strain Sd197) protein is Ribosomal RNA small subunit methyltransferase F.